Here is a 173-residue protein sequence, read N- to C-terminus: Large ribosomal subunit protein uL10 (173 aa).

Belongs to the universal ribosomal protein uL10 family. As to quaternary structure, part of the ribosomal stalk of the 50S ribosomal subunit. The N-terminus interacts with L11 and the large rRNA to form the base of the stalk. The C-terminus forms an elongated spine to which L12 dimers bind in a sequential fashion forming a multimeric L10(L12)X complex.

Its function is as follows. Forms part of the ribosomal stalk, playing a central role in the interaction of the ribosome with GTP-bound translation factors. This Chloroherpeton thalassium (strain ATCC 35110 / GB-78) protein is Large ribosomal subunit protein uL10.